Consider the following 257-residue polypeptide: MYRKFGMAAMLVSILLLMTGCFNVNEPINAQSEGIWDSYFVYPLSWLMIYFANAFNGSFGLAIIVVTLLIRLLILPLMIKQLKSTRAMQALQPEMQALREKYSAKDQRTQQKLQQETMALFQKHGVNPLAGCFPVLIQMPILLAFYHAIMRTREIGDEHFLWFVLNQPDPILLPIIAGITTFLQQKMMMVTDNPQMKVLLYVMPVMILVFAMFLPSSLALYWVIGNLFMILQTYFITGPNVGAKKVAADVKVGGKKK.

An N-terminal signal peptide occupies residues 1–20 (MYRKFGMAAMLVSILLLMTG). Cys21 is lipidated: N-palmitoyl cysteine. A lipid anchor (S-diacylglycerol cysteine) is attached at Cys21. The next 5 membrane-spanning stretches (helical) occupy residues 35–55 (IWDS…ANAF), 59–79 (FGLA…PLMI), 129–149 (LAGC…YHAI), 160–180 (FLWF…AGIT), and 205–225 (VMIL…WVIG).

The protein belongs to the OXA1/ALB3/YidC family. Type 2 subfamily.

The protein localises to the cell membrane. Functionally, required for the insertion and/or proper folding and/or complex formation of integral membrane proteins into the membrane. Involved in integration of membrane proteins that insert both dependently and independently of the Sec translocase complex, as well as at least some lipoproteins. In Halalkalibacterium halodurans (strain ATCC BAA-125 / DSM 18197 / FERM 7344 / JCM 9153 / C-125) (Bacillus halodurans), this protein is Membrane protein insertase YidC 1.